Reading from the N-terminus, the 208-residue chain is LexA repressor (208 aa).

The segment at residues 30–50 (VREICAAVKLSSTSTVHGHLA) is a DNA-binding region (H-T-H motif). Residues S129 and K167 each act as for autocatalytic cleavage activity in the active site.

This sequence belongs to the peptidase S24 family. As to quaternary structure, homodimer.

The enzyme catalyses Hydrolysis of Ala-|-Gly bond in repressor LexA.. In terms of biological role, represses a number of genes involved in the response to DNA damage (SOS response), including recA and lexA. In the presence of single-stranded DNA, RecA interacts with LexA causing an autocatalytic cleavage which disrupts the DNA-binding part of LexA, leading to derepression of the SOS regulon and eventually DNA repair. The chain is LexA repressor from Lactobacillus helveticus (strain DPC 4571).